The chain runs to 218 residues: Small ribosomal subunit protein uS5 (218 aa).

The S5 DRBM domain occupies 55–118 (LDHEVIDVSI…RNAKLNIIPV (64 aa)).

The protein belongs to the universal ribosomal protein uS5 family. In terms of assembly, part of the 30S ribosomal subunit. Contacts protein S4.

In terms of biological role, with S4 and S12 plays an important role in translational accuracy. The polypeptide is Small ribosomal subunit protein uS5 (Aeropyrum pernix (strain ATCC 700893 / DSM 11879 / JCM 9820 / NBRC 100138 / K1)).